We begin with the raw amino-acid sequence, 1070 residues long: MLRDGNEGMSTIPGSSQIQFEGFCKFIDQGLAEELHKFPKMEDTDQEMEFQLFVETYQLVEPLIKERDAVYESLTYSSELYVSAGLIWRAGRDMRKQTVFIGNIPLMNSLGTSLVNGIYRIVVNQILQSPGIYYRSELDHNGISVYTGTIISDWGGRSELEIDRKARIWARVSRKQKISILVPSSAMGSNLRDILDNVCYPEIFLSFPNDKEKKKIGSKENAVLEFYQQFACVGGDPVFSESLCKELQKKFFQQRCELGRIGRRNMNQRLNLDIPQNSTFLLPRDVLAAADHLIGMKFGMGTLDDLNHLKNKRIRSVADLLQDQFGLALVRLENVVRGTICGAIRHKLIPTPHNLVTSTPLTTTYESFFGLHPLSQVLDRTNPLTQIVHGRKWSYLGPGGLTGRTASFRIRDIHPSHYGRICPIDTSEGINVGLIGSLAIHARIGDWGSIESPFYEISERLKEEQMVYLSPRRDEYYMVAAGNSLALNRGIQEEQVVPARYRQEFLTIAWEQIHLRSIYPFQYFSIGASLIPFIEHNDANRALMSSNMQRQAVPLSHSEKCIVGTGLERQAALDSGGSAIAEHEGKITYTDTEKIVLSGNGDTISIPLVMYQRSNKNTCMHQKPQVHRGKCVKKGQILADGAAIIGGELALGKNILVAYMPWEGYNSEDAVLISERLVYGDIYTSFHIRKYEIQTHVTSQGPERITNEIPHLEAHLLRNLDKNGIVMLGSWVETGDILVGKLTPQTAKESSYAPEDRLLRAILGIQVSTAKETCLKLPIGGRGRVIDVRWIQKKRGSSSNPETIRVYISQKREIKVGDKVAGRHGNKGIISKILPRQDMPYLQDGTPVDMVFNPLGIPSRMNVGQMFECSIGLAGNLLNRHYRIIPFDERYEQEASRKLVFPELYKASKQTANPWVFEPEYPGKSRIFDGRTGDPFEQPVIIGKSYMMKLIHQVDDKIHGRSSGHYALVTQQPLRGRAKHGGQRVGEMEVWALEGFGVAHISQEMLTYKSDHIRARQEVLGTTIIGGTIPNPDGAPESFRLLVRELRSLALELNHFLVSEKSFQINRKEA.

This sequence belongs to the RNA polymerase beta chain family. As to quaternary structure, in plastids the minimal PEP RNA polymerase catalytic core is composed of four subunits: alpha, beta, beta', and beta''. When a (nuclear-encoded) sigma factor is associated with the core the holoenzyme is formed, which can initiate transcription.

The protein resides in the plastid. The protein localises to the chloroplast. The enzyme catalyses RNA(n) + a ribonucleoside 5'-triphosphate = RNA(n+1) + diphosphate. In terms of biological role, DNA-dependent RNA polymerase catalyzes the transcription of DNA into RNA using the four ribonucleoside triphosphates as substrates. The polypeptide is DNA-directed RNA polymerase subunit beta (Illicium oligandrum (Star anise)).